The sequence spans 2298 residues: MPNTTMELFIFGDQTLDVQPCLRGLAQHRHNPVLEDFFTKTYQVLRTEIDQLPHNVKVGLPRFTCIDDIIFRPPGSKSCIALDMAMTTFYQLGVFIRVTCALGLCTGALAAAAVSCSRNALDLVPMAVDAVRVAFRTGAHVLDIAHRIESPDASDQSWLLYVPAVEAAETALKAFREHTLLPGIRQPYITAYTLNSVMVSGPPSSLEQLKRHAPFRELNPQSVSINGPYHAPHLYSQEDIDDIVGDLACQDVHSCSCRVPVIAGDGNPVPDADFGTILKAAVAQILRQQINWNGILRELLTRHDIAGSLTLTVTTIGTKTDHFIYNVLKQSPLREYLSSKPAQSRQPVSNEGAPEPGNGRQKLAIIGMSGRFPGADDIEEFWTLLEQGLDVHKPVPSLRWDAQTHVDPTRARKNTSSTPFGCWLEHPDLFDARFFNISPREAPQIDPAQRLALMTAYEAIEQAGIVPDATPSTRRDRVGVFYGTTSNDWMETNSAQNIDTYFIPGGNRAFIPGRINYYFKFSGPSYAVDTACSSSLASIHLACNALWRREIDTAIAGGTNVLTNPDFTAGLDRGQFLSRTGNCKTFDDSADGYCRGEGVATVIIKRLEDAVADKDPILGLILSASTNHSAESESITRPHVGAQREILSNILNRGASNPYDVSYVEMHGTGTQVGDASEMSSVLETFAPAPNRVKSARGHDTPLYLGSAKANIGHGEAVSGVSSLIKVLLMMQRNTIVPHCGIKTKINHKFPTDLKDRNAHIALQPVSWERNSASSQTRKVVVNNFSAAGGNSALLVEDAPPKRESPGEAALVDPRQHHVVAVSARNAVSLEGNIRSMLKYLRENPDVQLGKLSYTTTARRLHHQHRVMVTGSKVEDIATQLQAALDEKTGMTRPKAALKVVFAFTGQGAHYPGMGKELFENFSVFRTEVHRLDRLGQTMGFPSVLPVIQSPANDIDIGTFQPSAVQLAGVCTQMALCKLWAAWNITPTAVVGHSLGEYPALNAAGVLSDADTIYLVGKRAQLLEEKCVRGTHSMLAIKASVDQITGALENMKYHVACINSPVETVLAAANEELYALKDVLTAAGFKSTPLKVPYAFHSPQVDPVLADFKELSRGVTFSRPRIPILSALDGNLHVDDHFFDPEYLIRHTREPVNMHRTLLTAAREHVITEMTTVLEIGSHPAVSGMVKGVLGPQVSCLATASRGRPNLQVLAATLKVLYMKGADICWPQYHIDFKASHEVIPLPAYSWDLKSYWIQYVNDWSLRKGDPPQVIQSSPALESTTVHRVVEETHDSTKTRIVIEADIARKDLSPLVQGHEVDGIPLCTPSVYADMALTLGTYLLKRYRPDQNDSLVDVTDMVISKALILRAGASEQLLQAHADADWAANAVTIKFKSFDARQKLQEHSQCVVRFRDRGLLEDLQNSAPSVKAKTQALRDGIVTGETARFNRPMVYRAIRPLAKFHEDYRAIDEIVLNSETLEASSRLSFGDVKRGGTYHTHPAIIDSLTQSCGFTMNCNDRSDLDKEVFMNHGWGSLQIFEPLSFDKVYTTYTRMAEGSDHLWHGDVVIFDGDKVVAYIGQISIQGVPRRVLKTVLSIESGSQKKHQPTQMKQPHTATQANGYPVANGHAQATPTSGPVNGEPRPSRFPRALEIIAEESGLSLADLTDTTVFSDVGIDSLLNLTISSRFKEEFDVDLDFTALSQDYPTVASLRALLSEPERSTNGMPAASAKDTSRFDEIPPMNGHKTNGHVMNGHSNGSSNGLPDTDKVDFQRVLQIISEESGVAMEELSEDTNFADAGIDSLLSLVIVSRFRDELELDIAHESLLMDCQSVADLKRYLFPQDHSTAENGVEPPAKNGLAADAPAVSSMSQDIISNGNGETAQPLGASLLLRQKAVDHYVQKYTAGFNAPIPNGAGNESEKTDNVKVVLVTGASGSLGGHLIDQLAQRADVKTVVCLNREHNLEPYTRQQKAMRDKGIRSFDKIRSKLLVLQTDSSQPMLGLPKSQYEELVDSVTHVIHNAWPMSAKRPLDGFEKQFQILRNLIDFACVVTSRRPKSFKFGFQLVSSIGVVGHHGLSKPHDRKEKTIVPESRVNIDSVLPNGYSEAKWACERMLDETLHKHYADRVRTMVVRLGQIAGSKRCGYWNPTEHFGFLIKSSQTLNALPDVPGMVYWTPVEEVAGSLVDLILADNRPYPVYHVDNPIGQPWSEMNKVLADALNIPNLVPFVEWVERVRSAPHRDNPAAMLSDFFIDNYLRMSCGGLVLDVKNTLEHSRVLSGVGPVTEDVVRKYIHVWKEIGFLK.

Residues 8 to 333 are N-terminal acylcarrier protein transacylase domain (SAT); the sequence is LFIFGDQTLD…IYNVLKQSPL (326 aa). A disordered region spans residues 336–361; sequence YLSSKPAQSRQPVSNEGAPEPGNGRQ. The segment covering 340–349 has biased composition (polar residues); it reads KPAQSRQPVS. The region spanning 360–798 is the Ketosynthase family 3 (KS3) domain; that stretch reads RQKLAIIGMS…GGNSALLVED (439 aa). Residues Cys-532, His-667, and His-714 each act as for beta-ketoacyl synthase activity in the active site. Residues 901–1193 are acyl/malonyl transferases; it reads VFAFTGQGAH…GMVKGVLGPQ (293 aa). Ser-994 serves as the catalytic For acyl/malonyl transferase activity. The N-terminal hotdog fold stretch occupies residues 1283–1415; that stretch reads HRVVEETHDS…CVVRFRDRGL (133 aa). The region spanning 1283–1589 is the PKS/mFAS DH domain; the sequence is HRVVEETHDS…IQGVPRRVLK (307 aa). Residues 1294–1586 form a product template (PT) domainn region; the sequence is KTRIVIEADI…QISIQGVPRR (293 aa). Catalysis depends on His-1315, which acts as the Proton acceptor; for dehydratase activity. The tract at residues 1438–1589 is C-terminal hotdog fold; the sequence is VTGETARFNR…IQGVPRRVLK (152 aa). Asp-1502 acts as the Proton donor; for dehydratase activity in catalysis. Residues 1619-1642 form a disordered region; the sequence is YPVANGHAQATPTSGPVNGEPRPS. Residues 1641–1716 enclose the Carrier 1 domain; sequence PSRFPRALEI…SLRALLSEPE (76 aa). Residue Ser-1675 is modified to O-(pantetheine 4'-phosphoryl)serine. Residues 1716–1762 form a disordered region; sequence ERSTNGMPAASAKDTSRFDEIPPMNGHKTNGHVMNGHSNGSSNGLPD. Residues 1751 to 1760 are compositionally biased toward polar residues; sequence GHSNGSSNGL. One can recognise a Carrier 2 domain in the interval 1765-1840; it reads KVDFQRVLQI…DLKRYLFPQD (76 aa). The residue at position 1799 (Ser-1799) is an O-(pantetheine 4'-phosphoryl)serine. The segment at 1927–2178 is reductase (R) domain; sequence VTGASGSLGG…YWTPVEEVAG (252 aa).

Its pathway is pigment biosynthesis. The protein operates within secondary metabolite biosynthesis. Its function is as follows. Non-reducing polyketide synthase; part of the gene cluster that mediates the biosynthesis of pleosporalin A, ascomycone A, as well as a third cryptic naphthoquinone derived pigment, all responsible for the coloration of conidia. The non-reducing polyketide synthase pgmA is responsible for the condensation of seven acetyl-CoA units to produce the cyclized heptaketide 3-acetonyl-1,6,8-trihydroxy-2-naphthaldehyde. The pathway begins with the biosynthesis of the cyclized heptaketide 3-acetonyl-1,6,8-trihydroxy-2-naphthaldehyde by the NR-PKS pgmA. The C-6 hydroxyl group is further methylated by the O-methyltransferase pgmB to yield fusarubinaldehyde which is in turn oxidized by the cytochrome P450 monooxygenase pgmC at C-9. The C-1 hydroxyl group is then methylated spontaneously. Although pgmE, pgmD and pgmH are essential for the production of pleosporalin A, it is not the case for the 2 other final products and it remains difficult to assign a specific function to each enzyme. PgmF and pgmG seem not to be involved in pigment biosynthesis although they were regulated by the cluster-specific transcription factor pgmR. The sequence is that of Non-reducing polyketide synthase pgmA from Aspergillus terreus (strain NIH 2624 / FGSC A1156).